The chain runs to 483 residues: Aspartyl/glutamyl-tRNA(Asn/Gln) amidotransferase subunit B (483 aa).

This sequence belongs to the GatB/GatE family. GatB subfamily. As to quaternary structure, heterotrimer of A, B and C subunits.

The enzyme catalyses L-glutamyl-tRNA(Gln) + L-glutamine + ATP + H2O = L-glutaminyl-tRNA(Gln) + L-glutamate + ADP + phosphate + H(+). The catalysed reaction is L-aspartyl-tRNA(Asn) + L-glutamine + ATP + H2O = L-asparaginyl-tRNA(Asn) + L-glutamate + ADP + phosphate + 2 H(+). Allows the formation of correctly charged Asn-tRNA(Asn) or Gln-tRNA(Gln) through the transamidation of misacylated Asp-tRNA(Asn) or Glu-tRNA(Gln) in organisms which lack either or both of asparaginyl-tRNA or glutaminyl-tRNA synthetases. The reaction takes place in the presence of glutamine and ATP through an activated phospho-Asp-tRNA(Asn) or phospho-Glu-tRNA(Gln). The polypeptide is Aspartyl/glutamyl-tRNA(Asn/Gln) amidotransferase subunit B (Herpetosiphon aurantiacus (strain ATCC 23779 / DSM 785 / 114-95)).